The sequence spans 395 residues: Levanbiose-producing levanase (395 aa).

Asp-1 is a catalytic residue. Residues 59–60 (WT), 124–125 (RD), Glu-173, and Trp-261 contribute to the substrate site.

The protein belongs to the glycosyl hydrolase 32 family.

Its subcellular location is the membrane. The catalysed reaction is Hydrolysis of (2-&gt;6)-beta-D-fructofuranan, to remove successive disaccharide residues as levanbiose, i.e. 6-(beta-D-fructofuranosyl)-D-fructose, from the end of the chain.. Catalyzes the degradation of levan mainly into levanbiose (difructose). Can also hydrolyze inulin. The polypeptide is Levanbiose-producing levanase (levB) (Geobacillus stearothermophilus (Bacillus stearothermophilus)).